Reading from the N-terminus, the 160-residue chain is Transcription elongation factor GreA (160 aa).

The stretch at 2-81 (AEKKNILTYE…KNAEVVVEDE (80 aa)) forms a coiled coil. A disordered region spans residues 36-55 (KEAREQGDLSENAEYDAAKD).

It belongs to the GreA/GreB family.

Necessary for efficient RNA polymerase transcription elongation past template-encoded arresting sites. The arresting sites in DNA have the property of trapping a certain fraction of elongating RNA polymerases that pass through, resulting in locked ternary complexes. Cleavage of the nascent transcript by cleavage factors such as GreA or GreB allows the resumption of elongation from the new 3'terminus. GreA releases sequences of 2 to 3 nucleotides. The polypeptide is Transcription elongation factor GreA (Lachnoclostridium phytofermentans (strain ATCC 700394 / DSM 18823 / ISDg) (Clostridium phytofermentans)).